The sequence spans 886 residues: Cytosolic carboxypeptidase-like protein 5 (886 aa).

Positions 157–570 (YPFSYSDCQE…AMAIAALDMA (414 aa)) constitute a Peptidase M14 domain. Residues His252 and Glu255 each coordinate Zn(2+). Over residues 344–354 (SQSSSEHQPSS) the composition is skewed to low complexity. Residues 344–364 (SQSSSEHQPSSCLPPDAPVSD) form a disordered region. His434 serves as a coordination point for Zn(2+). The Proton donor/acceptor role is filled by Glu516. 2 disordered regions span residues 605–734 (STLN…SSHK) and 784–848 (LQAR…FSPI). Residues 631 to 640 (CSENTLSRAR) are compositionally biased toward polar residues. The span at 641–666 (SFSTGTSAGGSSSSQQNSPQMKNSPS) shows a compositional bias: low complexity. The segment covering 696 to 705 (REPRSQDRRR) has biased composition (basic and acidic residues). The span at 714–732 (PAGSLAPSPAPTSSGPASS) shows a compositional bias: low complexity. Ser841 is modified (phosphoserine).

This sequence belongs to the peptidase M14 family. Requires Zn(2+) as cofactor. In terms of tissue distribution, expressed in brain.

Its subcellular location is the cytoplasm. It localises to the cytosol. The protein resides in the nucleus. It is found in the cytoskeleton. The protein localises to the spindle. Its subcellular location is the midbody. It catalyses the reaction gamma-L-glutamyl-L-glutamyl-[protein] + H2O = L-glutamyl-[protein] + L-glutamate. The enzyme catalyses (L-glutamyl)(n+1)-gamma-L-glutamyl-L-glutamyl-[protein] + H2O = (L-glutamyl)(n)-gamma-L-glutamyl-L-glutamyl-[protein] + L-glutamate. It carries out the reaction C-terminal L-alpha-aminoacyl-L-glutamyl-[tubulin] + H2O = C-terminal L-alpha-aminoacyl-[tubulin] + L-glutamate. The catalysed reaction is C-terminal L-alpha-aminoacyl-L-glutamyl-L-glutamyl-[tubulin] + H2O = C-terminal L-alpha-aminoacyl-L-glutamyl-[tubulin] + L-glutamate. Metallocarboxypeptidase that mediates deglutamylation of tubulin and non-tubulin target proteins. Catalyzes the removal of polyglutamate side chains present on the gamma-carboxyl group of glutamate residues within the C-terminal tail of alpha- and beta-tubulin. Cleaves alpha- and gamma-linked polyglutamate tubulin side-chain, as well as the branching point glutamate. Also catalyzes the removal of alpha-linked glutamate residues from the carboxy-terminus of alpha-tubulin. Mediates deglutamylation of nucleotidyltransferase CGAS, leading to CGAS antiviral defense response activation. This Homo sapiens (Human) protein is Cytosolic carboxypeptidase-like protein 5.